The chain runs to 124 residues: Histone H2A, embryonic (124 aa).

Residues 1 to 18 (MSGRGKSGKARTKAKTRS) show a composition bias toward basic residues. Residues 1-21 (MSGRGKSGKARTKAKTRSSRA) form a disordered region. Ser2 bears the N-acetylserine mark. Position 2 is a phosphoserine (Ser2). Position 104 is an N5-methylglutamine (Gln104). Lys119 is covalently cross-linked (Glycyl lysine isopeptide (Lys-Gly) (interchain with G-Cter in ubiquitin)).

The protein belongs to the histone H2A family. The nucleosome is a histone octamer containing two molecules each of H2A, H2B, H3 and H4 assembled in one H3-H4 heterotetramer and two H2A-H2B heterodimers. The octamer wraps approximately 147 bp of DNA. Monoubiquitination of Lys-119 gives a specific tag for epigenetic transcriptional repression. In terms of processing, phosphorylation of Ser-2 directly represses transcription.

It is found in the nucleus. The protein resides in the chromosome. Core component of nucleosome. Nucleosomes wrap and compact DNA into chromatin, limiting DNA accessibility to the cellular machineries which require DNA as a template. Histones thereby play a central role in transcription regulation, DNA repair, DNA replication and chromosomal stability. DNA accessibility is regulated via a complex set of post-translational modifications of histones, also called histone code, and nucleosome remodeling. The polypeptide is Histone H2A, embryonic (Psammechinus miliaris (Green sea urchin)).